Consider the following 273-residue polypeptide: Type II restriction enzyme HgiCII (273 aa).

The protein belongs to the TdeIII type II restriction endonuclease family.

The enzyme catalyses Endonucleolytic cleavage of DNA to give specific double-stranded fragments with terminal 5'-phosphates.. Its function is as follows. A P subtype restriction enzyme that recognizes the double-stranded sequence 5'-GGWCC-3' and cleaves after G-1. In Herpetosiphon aurantiacus (Herpetosiphon giganteus), this protein is Type II restriction enzyme HgiCII.